The sequence spans 152 residues: Large ribosomal subunit protein bL9 (152 aa).

Belongs to the bacterial ribosomal protein bL9 family.

Functionally, binds to the 23S rRNA. This chain is Large ribosomal subunit protein bL9, found in Mycobacterium marinum (strain ATCC BAA-535 / M).